Reading from the N-terminus, the 420-residue chain is Reticulon-4 receptor-like 2 (420 aa).

The signal sequence occupies residues 1-46; the sequence is MLPGLRRLLQAPASACLLLMLLALPLAAPSCPMLCTCYSSPPTVSC. Cystine bridges form between Cys-31-Cys-37 and Cys-35-Cys-46. Positions 47 to 60 constitute an LRRNT domain; that stretch reads QANNFSSVPLSLPP. An N-linked (GlcNAc...) asparagine glycan is attached at Asn-50. LRR repeat units follow at residues 61–82, 83–104, 107–129, 132–153, 156–177, 180–201, 204–225, and 228–249; these read STQR…TFGS, NLLT…TFRH, ALEE…TFQG, RLQS…IFRG, SLQY…LFAD, NLSH…VFRG, SLDR…AFRG, and RLTI…ALAD. The N-linked (GlcNAc...) asparagine glycan is linked to Asn-93. Asn-236 carries N-linked (GlcNAc...) asparagine glycosylation. In terms of domain architecture, LRRCT spans 261-312; sequence NPWACDCRARPLWAWFQRARVSSSDVTCATPPERQGRDLRALREADFQACPP. 2 disulfides stabilise this stretch: Cys-265/Cys-288 and Cys-267/Cys-310. Residues 308 to 399 form a disordered region; sequence QACPPAAPTR…CQAPPDSRGP (92 aa). The tract at residues 315–327 is important for interaction with MAG; sequence PTRPGSRARGNSS. The segment covering 351 to 360 has biased composition (basic and acidic residues); it reads LPAEDSRGRQ. Cys-390 carries the GPI-anchor amidated cysteine lipid modification. Positions 391-420 are cleaved as a propeptide — removed in mature form; the sequence is QAPPDSRGPALSAGLPSPLLCLLLLVPHHL.

The protein belongs to the Nogo receptor family. In terms of assembly, interaction with MAG is controversial, and may be indirect. Does not interact with MAG, OMG and RTN4. Interacts with MAG. Undergoes zinc metalloproteinase-mediated ectodomain shedding in neuroblastoma cells; is released both as a full-length ectodomain and an N-terminal fragment containing the leucine-rich repeat (LRR) region of the protein. Post-translationally, N-glycosylated. In terms of tissue distribution, highly expressed in brain and liver. Expressed at lower levels in kidney, mammary gland, placenta, skeletal muscle, spleen and thyroid.

Its subcellular location is the cell membrane. It is found in the membrane raft. It localises to the cell projection. The protein resides in the dendrite. The protein localises to the perikaryon. Its subcellular location is the axon. Cell surface receptor that plays a functionally redundant role in the inhibition of neurite outgrowth mediated by MAG. Plays a functionally redundant role in postnatal brain development. Contributes to normal axon migration across the brain midline and normal formation of the corpus callosum. Does not seem to play a significant role in regulating axon regeneration in the adult central nervous system. Protects motoneurons against apoptosis; protection against apoptosis is probably mediated by MAG. Like other family members, plays a role in restricting the number dendritic spines and the number of synapses that are formed during brain development. Signaling mediates activation of Rho and downstream reorganization of the actin cytoskeleton. This Homo sapiens (Human) protein is Reticulon-4 receptor-like 2.